The sequence spans 410 residues: Proteasomal ubiquitin receptor ADRM1 (410 aa).

Residues 17–130 form the Pru domain; sequence SSSKYLVEFR…RKVNEYLNNP (114 aa). Residue S18 is modified to Phosphoserine. The span at 191–257 shows a compositional bias: low complexity; that stretch reads GSGGPATSSS…PAAQTPSLPA (67 aa). Disordered stretches follow at residues 191 to 264 and 381 to 410; these read GSGG…SSTQ and FAKA…MSLD. The region spanning 281–395 is the DEUBAD domain; sequence PAMPTEGSGV…EGSDSKTDDG (115 aa). Residues 381-401 are compositionally biased toward basic and acidic residues; the sequence is FAKAMEGSDSKTDDGDSKDKK.

Belongs to the ADRM1 family. As to quaternary structure, component of the 19S proteasome regulatory particle complex. The 26S proteasome consists of a 20S core particle (CP) and two 19S regulatory subunits (RP).

It localises to the cytoplasm. The protein localises to the nucleus. Component of the 26S proteasome, a multiprotein complex involved in the ATP-dependent degradation of ubiquitinated proteins. This complex plays a key role in the maintenance of protein homeostasis by removing misfolded or damaged proteins, which could impair cellular functions, and by removing proteins whose functions are no longer required. Therefore, the proteasome participates in numerous cellular processes, including cell cycle progression, apoptosis, or DNA damage repair. Within the complex, functions as a proteasomal ubiquitin receptor. This Danio rerio (Zebrafish) protein is Proteasomal ubiquitin receptor ADRM1 (adrm1b).